A 313-amino-acid chain; its full sequence is Thiamine thiazole synthase (313 aa).

Residues alanine 71, 92 to 93, glycine 100, and valine 165 contribute to the substrate site; that span reads EA. Position 199 is a 2,3-didehydroalanine (Cys) (cysteine 199). Substrate is bound by residues aspartate 201, histidine 216, methionine 268, and 278 to 280; that span reads RMG.

This sequence belongs to the THI4 family. As to quaternary structure, homooctamer. Fe cation is required as a cofactor. Post-translationally, during the catalytic reaction, a sulfide is transferred from Cys-199 to a reaction intermediate, generating a dehydroalanine residue.

Its subcellular location is the cytoplasm. The protein localises to the nucleus. The catalysed reaction is [ADP-thiazole synthase]-L-cysteine + glycine + NAD(+) = [ADP-thiazole synthase]-dehydroalanine + ADP-5-ethyl-4-methylthiazole-2-carboxylate + nicotinamide + 3 H2O + 2 H(+). Its function is as follows. Involved in biosynthesis of the thiamine precursor thiazole. Catalyzes the conversion of NAD and glycine to adenosine diphosphate 5-(2-hydroxyethyl)-4-methylthiazole-2-carboxylic acid (ADT), an adenylated thiazole intermediate. The reaction includes an iron-dependent sulfide transfer from a conserved cysteine residue of the protein to a thiazole intermediate. The enzyme can only undergo a single turnover, which suggests it is a suicide enzyme. May have additional roles in adaptation to various stress conditions and in DNA damage tolerance. The chain is Thiamine thiazole synthase from Coprinopsis cinerea (strain Okayama-7 / 130 / ATCC MYA-4618 / FGSC 9003) (Inky cap fungus).